The primary structure comprises 167 residues: Mitochondrial fission 1 protein B (167 aa).

A TPR repeat occupies arginine 92 to serine 125. The chain crosses the membrane as a helical span at residues valine 144–isoleucine 164.

This sequence belongs to the FIS1 family. Interacts with PEX11A, PEX11B, PEX11C, PEX11D and PEX11E.

It is found in the mitochondrion outer membrane. The protein localises to the peroxisome membrane. In terms of biological role, component of the peroxisomal and mitochondrial division machineries. Plays a role in promoting the fission of mitochondria and peroxisomes. In association with PEX11C, PEX11D, PEX11E and DRP3A, is involved in cell cycle-associated constitutive self-replication of preexisting peroxisomes. This Arabidopsis thaliana (Mouse-ear cress) protein is Mitochondrial fission 1 protein B (FIS1B).